Consider the following 217-residue polypeptide: Oxygen regulatory protein NreC (217 aa).

Residues 2–119 (KIVIADDHAV…QLLLAIRTVY (118 aa)) enclose the Response regulatory domain. Asp53 carries the 4-aspartylphosphate modification. The HTH luxR-type domain maps to 148–213 (TTDPFKILSK…ELVEYALKKK (66 aa)). A DNA-binding region (H-T-H motif) is located at residues 172–191 (NKEIAEKLFVSVKTVEAHKT).

Post-translationally, phosphorylated by NreB.

It is found in the cytoplasm. Member of the two-component regulatory system NreB/NreC involved in the control of dissimilatory nitrate/nitrite reduction in response to oxygen. Phosphorylated NreC binds to a GC-rich palindromic sequence at the promoters of the nitrate (narGHJI) and nitrite (nir) reductase operons, as well as the putative nitrate transporter gene narT, and activates their expression. The sequence is that of Oxygen regulatory protein NreC (nreC) from Staphylococcus aureus (strain USA300 / TCH1516).